Consider the following 116-residue polypeptide: Galanin-like peptide (116 aa).

The signal sequence occupies residues 1–24 (MAPPSVPLVLLLVLLLSLAETPAS). Residues 87-116 (NVMETFAKPEIGDLGMLSMKIPKEEDVLKS) constitute a propeptide that is removed on maturation.

It belongs to the galanin family. Isoform 2 is found in ganglia of ganglioneuroma and ganglioneuroblastoma, as well as in differentiated tumor cells of neuroblastoma tissues. Not found in undifferentiated neuroblasts. Isoform 2 is found in the skin, in pericytes covering microvascular arterioles and venules on their abluminal surfaces. In larger vessels, isoform 2 is expressed in layers of smooth muscle cells. Isoform 2 is not detected in endothelial cells.

The protein resides in the secreted. In terms of biological role, hypothalamic neuropeptide which binds to the G-protein-coupled galanin receptors (GALR1, GALR2 and GALR3). Involved in a large number of putative physiological functions in CNS homeostatic processes, including the regulation of gonadotropin-releasing hormone secretion. Exhibits potent and dose-dependent vasoconstrictor and anti-edema activity in the cutaneous microvasculature, a physiologic effects which does not appear to be mediated via GALR1 or GALR2. Exhibits antimicrobial activity against Gram-negative bacterias, inducing bacterial membrane blebbing. The sequence is that of Galanin-like peptide (GALP) from Homo sapiens (Human).